The following is a 313-amino-acid chain: Porphobilinogen deaminase (313 aa).

Cysteine 241 carries the post-translational modification S-(dipyrrolylmethanemethyl)cysteine.

It belongs to the HMBS family. As to quaternary structure, monomer. It depends on dipyrromethane as a cofactor.

The enzyme catalyses 4 porphobilinogen + H2O = hydroxymethylbilane + 4 NH4(+). The protein operates within porphyrin-containing compound metabolism; protoporphyrin-IX biosynthesis; coproporphyrinogen-III from 5-aminolevulinate: step 2/4. It participates in porphyrin-containing compound metabolism; chlorophyll biosynthesis. Functionally, tetrapolymerization of the monopyrrole PBG into the hydroxymethylbilane pre-uroporphyrinogen in several discrete steps. This Chlorobium limicola (strain DSM 245 / NBRC 103803 / 6330) protein is Porphobilinogen deaminase.